Reading from the N-terminus, the 490-residue chain is Cyclin-T1-3 (490 aa).

Disordered stretches follow at residues 275–391 (RVAP…GDVA) and 414–490 (AAED…RLRS). 2 stretches are compositionally biased toward polar residues: residues 282–298 (QGND…NQRA) and 352–365 (TANS…SSTM). Basic and acidic residues-rich tracts occupy residues 367-391 (AMKK…GDVA) and 457-490 (QEYR…RLRS).

This sequence belongs to the cyclin family. Cyclin T subfamily.

The polypeptide is Cyclin-T1-3 (CYCT1-3) (Oryza sativa subsp. japonica (Rice)).